The sequence spans 122 residues: Mth938 domain-containing protein (122 aa).

The tract at residues 6 to 122 (IASLSWGQMK…RVGGVFHSTC (117 aa)) is MTH138-like domain.

The protein belongs to the AAMDC family. Widely expressed, with high expression in the adipose tissue and skeletal muscle (at protein level).

It is found in the cytoplasm. Functionally, may play a role in preadipocyte differentiation and adipogenesis. This Mus musculus (Mouse) protein is Mth938 domain-containing protein (Aamdc).